Reading from the N-terminus, the 285-residue chain is 1,4-dihydroxy-2-naphthoyl-CoA synthase (285 aa).

Substrate-binding positions include arginine 45, 84 to 88 (AGGDQ), tyrosine 97, 129 to 133 (YSIGG), threonine 155, serine 161, tyrosine 258, and lysine 273. 154 to 156 (QTG) contacts hydrogencarbonate.

This sequence belongs to the enoyl-CoA hydratase/isomerase family. MenB subfamily. Homohexamer. Hydrogencarbonate serves as cofactor.

It catalyses the reaction 2-succinylbenzoyl-CoA + H(+) = 1,4-dihydroxy-2-naphthoyl-CoA + H2O. It functions in the pathway quinol/quinone metabolism; 1,4-dihydroxy-2-naphthoate biosynthesis; 1,4-dihydroxy-2-naphthoate from chorismate: step 6/7. Its pathway is quinol/quinone metabolism; menaquinone biosynthesis. In terms of biological role, converts o-succinylbenzoyl-CoA (OSB-CoA) to 1,4-dihydroxy-2-naphthoyl-CoA (DHNA-CoA). This Salmonella typhimurium (strain LT2 / SGSC1412 / ATCC 700720) protein is 1,4-dihydroxy-2-naphthoyl-CoA synthase.